The primary structure comprises 397 residues: MALLRGVFVVAAKRTPFGAYGGLLKDFTATDLSEFAAKAALSAGKVSPETVDSVIMGNVLQSSSDAIYLARHVGLRVGIPKETPALTINRLCGSGFQSIVNGCQEICVKEAEVVLCGGTESMSQAPYCVRTVRFGTKLGSDIKLEDSLWVSLTDQHVQLPIAMTAENLAVKHKISREECDKYALQSQQRWKAANDAGYFNDEMAPIEVKTKKGKQTMQVDEHARPQTTLEQLQKLPPVFKKDGTVTAGNASGIADGAGAVIIASEDAVKKHNFTPLARIVGYFVSGCDPSIMGIGPVPAISGALKKAGLSLKDMDLVEVNEAFAPQYLAVERSLDLDISKTNVNGGAIALGHPLGGSGSRITAHLVHELRRRGGKYAVGSACIGGGQGIAVIIQSTA.

A mitochondrion; not cleaved-targeting transit peptide spans 1–16 (MALLRGVFVVAAKRTP). N6-acetyllysine; alternate is present on lysine 25. Lysine 25 is subject to N6-succinyllysine; alternate. Lysine 45 bears the N6-succinyllysine mark. Cysteine 92 serves as the catalytic Acyl-thioester intermediate. Residue threonine 119 is modified to Phosphothreonine. Phosphoserine is present on serine 121. Position 127 is a phosphotyrosine (tyrosine 127). A Phosphothreonine modification is found at threonine 136. Lysine 137 carries the post-translational modification N6-acetyllysine; alternate. An N6-succinyllysine; alternate modification is found at lysine 137. Position 140 is a phosphoserine (serine 140). Residues lysine 143, lysine 171, lysine 191, and lysine 209 each carry the N6-acetyllysine; alternate modification. An N6-succinyllysine; alternate mark is found at lysine 143, lysine 171, lysine 191, and lysine 209. Residues lysine 211, lysine 212, and lysine 214 each carry the N6-succinyllysine modification. Arginine 224 and threonine 227 together coordinate CoA. Residue lysine 234 is modified to N6-acetyllysine; alternate. Lysine 234 bears the N6-succinyllysine; alternate mark. Lysine 240 carries the N6-succinyllysine modification. Residue lysine 241 is modified to N6-acetyllysine. Position 251 (serine 251) interacts with CoA. N6-acetyllysine is present on residues lysine 269 and lysine 270. The residue at position 305 (lysine 305) is an N6-acetyllysine; alternate. Residue lysine 305 is modified to N6-succinyllysine; alternate. Serine 310 bears the Phosphoserine mark. Position 312 is an N6-acetyllysine; alternate (lysine 312). At lysine 312 the chain carries N6-succinyllysine; alternate. Serine 333 carries the phosphoserine modification. N6-acetyllysine occurs at positions 340 and 375. The active-site Proton donor/acceptor is the cysteine 382.

The protein belongs to the thiolase-like superfamily. Thiolase family. As to quaternary structure, homotetramer. Interacts with BNIP3.

The protein resides in the mitochondrion. It catalyses the reaction an acyl-CoA + acetyl-CoA = a 3-oxoacyl-CoA + CoA. It carries out the reaction 2 acetyl-CoA = acetoacetyl-CoA + CoA. The catalysed reaction is acetyl-CoA + H2O = acetate + CoA + H(+). The enzyme catalyses propanoyl-CoA + H2O = propanoate + CoA + H(+). It catalyses the reaction butanoyl-CoA + H2O = butanoate + CoA + H(+). It carries out the reaction hexanoyl-CoA + H2O = hexanoate + CoA + H(+). The catalysed reaction is octanoyl-CoA + H2O = octanoate + CoA + H(+). The enzyme catalyses decanoyl-CoA + H2O = decanoate + CoA + H(+). It catalyses the reaction dodecanoyl-CoA + H2O = dodecanoate + CoA + H(+). It carries out the reaction tetradecanoyl-CoA + H2O = tetradecanoate + CoA + H(+). The catalysed reaction is hexadecanoyl-CoA + H2O = hexadecanoate + CoA + H(+). It functions in the pathway lipid metabolism; fatty acid beta-oxidation. In terms of biological role, in the production of energy from fats, this is one of the enzymes that catalyzes the last step of the mitochondrial beta-oxidation pathway, an aerobic process breaking down fatty acids into acetyl-CoA. Using free coenzyme A/CoA, catalyzes the thiolytic cleavage of medium- to long-chain unbranched 3-oxoacyl-CoAs into acetyl-CoA and a fatty acyl-CoA shortened by two carbon atoms. Also catalyzes the condensation of two acetyl-CoA molecules into acetoacetyl-CoA and could be involved in the production of ketone bodies. Also displays hydrolase activity on various fatty acyl-CoAs. Thereby, could be responsible for the production of acetate in a side reaction to beta-oxidation. Abolishes BNIP3-mediated apoptosis and mitochondrial damage. The protein is 3-ketoacyl-CoA thiolase, mitochondrial (ACAA2) of Pongo abelii (Sumatran orangutan).